The chain runs to 362 residues: Protein Tob1 (362 aa).

A Bipartite nuclear localization signal motif is present at residues Arg-22 to Lys-39. Residues Val-82–Val-92 are important for nuclear localization. The span at Asp-144–Ser-160 shows a compositional bias: low complexity. The tract at residues Asp-144–Ser-171 is disordered. Residues Ala-161–Lys-220 form a required for interaction with CPEB3 region. Residue Thr-204 is modified to Phosphothreonine. A Nuclear export signal motif is present at residues Val-228 to Leu-236. The disordered stretch occupies residues Leu-234–Leu-284. 2 stretches are compositionally biased toward low complexity: residues Ser-238–Ser-256 and Gln-265–Gln-280.

This sequence belongs to the BTG family. In terms of assembly, interacts with ERBB2. Interacts with CNOT7. Interacts with CPEB3 (via C-terminal RNA-binding region); recruits CNOT7 to CPEB3 to form a ternary complex required for mRNA deadenylation and decay. Interacts with CNOT8. Interacts with CPEB4. Post-translationally, phosphorylated on Ser and Thr residues. As to expression, ubiquitous.

The protein resides in the cytoplasm. Its subcellular location is the nucleus. Functionally, anti-proliferative protein; the function is mediated by association with deadenylase subunits of the CCR4-NOT complex. Mediates CPEB3-accelerated mRNA deadenylation by binding to CPEB3 and recruiting CNOT7 which leads to target mRNA deadenylation and decay. The chain is Protein Tob1 (Tob1) from Mus musculus (Mouse).